Reading from the N-terminus, the 152-residue chain is Probable flagellum biosynthesis repressor protein FlbT (152 aa).

This sequence belongs to the FlbT family.

Its function is as follows. Has a post-transcriptional repressor function in flagellum biogenesis. Associates with the 5'-UTR of fljK mRNA and promotes its degradation. This is Probable flagellum biosynthesis repressor protein FlbT from Brucella canis (strain ATCC 23365 / NCTC 10854 / RM-666).